A 920-amino-acid chain; its full sequence is Non-structural polyprotein 1A (920 aa).

The next 4 membrane-spanning stretches (helical) occupy residues 239–259 (VFYYIHYYEMWNIFMFVLAIG), 286–306 (VLPTIPFHTTMTLWVMNTLMV), 313–333 (LLAITLAILAPILGIIFLCFM), and 344–364 (GLIATAVLIAGGHACLTLTGT). Residues His461, Asp489, and Ser551 each act as charge relay system; for serine protease activity in the active site. Tyr693 carries the O-(5'-phospho-RNA)-tyrosine modification. Disordered regions lie at residues 753-813 (FDQA…YSQT) and 900-920 (NKAPKNYKGPQKTKGPKTITH). The segment covering 783-795 (SQKKEKQLEHEQQ) has biased composition (basic and acidic residues). Residues 800-813 (TKPQKNEPQPYSQT) show a composition bias toward polar residues.

Belongs to the astroviridae polyprotein 1A family. As to quaternary structure, monomer. Post-translationally, cleaved by the viral and host proteases. The protease is probably autocatalytically cleaved. In terms of processing, cleaved presumably by viral and host proteases.

It localises to the host membrane. It carries out the reaction RNA(n) + a ribonucleoside 5'-triphosphate = RNA(n+1) + diphosphate. Responsible for the cleavage of the polyprotein into functional products. Functionally, covalently attached to the 5' extremity of the genomic and subgenomic RNAs. It may serve as a primer for the replicase. The protein is Non-structural polyprotein 1A (ORF1) of Human astrovirus-4 (HAstV-4).